The sequence spans 229 residues: ATP synthase subunit a (229 aa).

6 helical membrane-spanning segments follow: residues 25–45 (ADAI…SLIA), 86–106 (IATL…PGFF), 111–131 (NLNT…IVGI), 142–162 (FMGP…IGHL), 181–201 (LVLM…MMLM), and 202–222 (GVLV…IYIQ).

This sequence belongs to the ATPase A chain family. As to quaternary structure, F-type ATPases have 2 components, CF(1) - the catalytic core - and CF(0) - the membrane proton channel. CF(1) has five subunits: alpha(3), beta(3), gamma(1), delta(1), epsilon(1). CF(0) has three main subunits: a(1), b(2) and c(9-12). The alpha and beta chains form an alternating ring which encloses part of the gamma chain. CF(1) is attached to CF(0) by a central stalk formed by the gamma and epsilon chains, while a peripheral stalk is formed by the delta and b chains.

The protein resides in the cell inner membrane. Functionally, key component of the proton channel; it plays a direct role in the translocation of protons across the membrane. The protein is ATP synthase subunit a of Geobacter sulfurreducens (strain ATCC 51573 / DSM 12127 / PCA).